Reading from the N-terminus, the 188-residue chain is Elongation factor P (188 aa).

The protein belongs to the elongation factor P family.

It is found in the cytoplasm. It functions in the pathway protein biosynthesis; polypeptide chain elongation. In terms of biological role, involved in peptide bond synthesis. Stimulates efficient translation and peptide-bond synthesis on native or reconstituted 70S ribosomes in vitro. Probably functions indirectly by altering the affinity of the ribosome for aminoacyl-tRNA, thus increasing their reactivity as acceptors for peptidyl transferase. This chain is Elongation factor P, found in Leptospira interrogans serogroup Icterohaemorrhagiae serovar copenhageni (strain Fiocruz L1-130).